A 274-amino-acid chain; its full sequence is Thiamine kinase (274 aa).

Belongs to the thiamine kinase family.

It carries out the reaction thiamine + ATP = thiamine phosphate + ADP + H(+). It participates in cofactor biosynthesis; thiamine diphosphate biosynthesis; thiamine phosphate from thiamine: step 1/1. In terms of biological role, catalyzes the ATP-dependent phosphorylation of thiamine to thiamine phosphate. Is involved in thiamine salvage. The chain is Thiamine kinase from Escherichia coli O157:H7.